The primary structure comprises 408 residues: Aminoacylase-1B (408 aa).

Zn(2+) is bound at residue His80. Asp82 is a catalytic residue. Position 113 (Asp113) interacts with Zn(2+). Residue Glu147 is the Proton acceptor of the active site. Positions 148, 175, and 373 each coordinate Zn(2+). Ser408 carries the post-translational modification Phosphoserine.

This sequence belongs to the peptidase M20A family. In terms of assembly, homodimer. Zn(2+) serves as cofactor. Expressed in kidney.

The protein localises to the cytoplasm. The enzyme catalyses an N-acyl-L-amino acid + H2O = an L-alpha-amino acid + a carboxylate. It catalyses the reaction an N-acetyl-L-cysteine-S-conjugate + H2O = an S-substituted L-cysteine + acetate. Involved in the hydrolysis of N-acylated or N-acetylated amino acids (except L-aspartate). This chain is Aminoacylase-1B (Acy1b), found in Rattus norvegicus (Rat).